The sequence spans 583 residues: Estrogen receptor (583 aa).

A modulating region spans residues 1 to 138 (MYPEESRGSG…GFEITKNTRF (138 aa)). 2 consecutive NR C4-type zinc fingers follow at residues 139–159 (CAVC…CEGC) and 175–199 (CPAT…LRKC). Positions 139–204 (CAVCSDYASG…RLRKCYEVGM (66 aa)) form a DNA-binding region, nuclear receptor. A hinge region spans residues 205 to 265 (MKGGMRKDRG…PGGRSSLNNM (61 aa)). Residues 220–263 (EKHGPAQRQTSQNLPTHKASPQDGRKRAMSSSSTSGPGGRSSLN) are disordered. The region spanning 266-501 (PPDQVLLLLQ…DLLLEMLDAH (236 aa)) is the NR LBD domain. The interval 506–583 (PVKPSQSWSQ…GSHSDCTRIP (78 aa)) is disordered. The span at 539–551 (ASSAGSSSGPQGS) shows a compositional bias: low complexity.

Belongs to the nuclear hormone receptor family. NR3 subfamily. As to quaternary structure, binds DNA as a homodimer. Can form a heterodimer with ER-beta.

Its subcellular location is the nucleus. In terms of biological role, the steroid hormones and their receptors are involved in the regulation of eukaryotic gene expression and affect cellular proliferation and differentiation in target tissues. The sequence is that of Estrogen receptor (esr1) from Oreochromis aureus (Israeli tilapia).